The primary structure comprises 173 residues: RNA pyrophosphohydrolase (173 aa).

The 144-residue stretch at 6–149 folds into the Nudix hydrolase domain; sequence GFRANVGIII…KRDVYRKVMK (144 aa). The Nudix box signature appears at 38-59; sequence GGVDDGESAEEAMYRELYEEVG.

It belongs to the Nudix hydrolase family. RppH subfamily. A divalent metal cation is required as a cofactor.

Its function is as follows. Accelerates the degradation of transcripts by removing pyrophosphate from the 5'-end of triphosphorylated RNA, leading to a more labile monophosphorylated state that can stimulate subsequent ribonuclease cleavage. This is RNA pyrophosphohydrolase from Shewanella pealeana (strain ATCC 700345 / ANG-SQ1).